Reading from the N-terminus, the 515-residue chain is Recombining binding protein suppressor of hairless-like protein (515 aa).

Residues 1-40 (MDPRETTDPSLPPGPLTHLSLPDSSEVRLQSDGPSLLGSW) are disordered. 3 DNA-binding regions span residues 76–86 (QKSYGNEKRFF), 191–196 (SKPSQK), and 218–223 (RLRSQT). Residues 384 to 474 (PLISTLELSG…YPSPFSFTYT (91 aa)) form the IPT/TIG domain.

It belongs to the Su(H) family. As to quaternary structure, interacts weakly with EBNA2. Does not interact with any Notch proteins. As to expression, highly expressed in lung. Also detected in spleen, and brain.

The protein localises to the nucleus. Its function is as follows. Putative transcription factor, which cooperates with EBNA2 to activate transcription. The polypeptide is Recombining binding protein suppressor of hairless-like protein (Rbpjl) (Mus musculus (Mouse)).